A 124-amino-acid chain; its full sequence is Small ribosomal subunit protein bS6 (124 aa).

The tract at residues 99–124 (PLPAPRIVPGSEPEPVQQQEAAAVEA) is disordered. Residues 111–124 (PEPVQQQEAAAVEA) are compositionally biased toward low complexity.

It belongs to the bacterial ribosomal protein bS6 family.

Binds together with bS18 to 16S ribosomal RNA. The chain is Small ribosomal subunit protein bS6 from Prochlorococcus marinus (strain MIT 9313).